Consider the following 377-residue polypeptide: MESVDQSCSVPPGFRFHPTDEELVGYYLRKKVASQKIDLDVIRDIDLYRIEPWDLQESCRIGYEERNEWYFFSHKDKKYPTGTRTNRATMAGFWKATGRDKAVYDKSKLIGMRKTLVFYKGRAPNGQKTDWIMHEYRLESDENAPPQEEGWVVCRAFKKKPMTGQAKNTETWSSSYFYDELPSGVRSVTEPLNYVSKQKQNVFAQDLMFKQELEGSDIGLNFIHCDQFIQLPQLESPSLPLTKRPVSLTSITSLEKNKNIYKRHLIEEDVSFNALISSGNKDKKKKKTSVMTTDWRALDKFVASQLMSQEDGVSGFGGHHEEDNNKIGHYNNEESNNKGSVETASSTLLSDREEENRFISGLLCSNLDYDLYRDLHV.

Residues 10-159 enclose the NAC domain; the sequence is VPPGFRFHPT…GWVVCRAFKK (150 aa). Residues 110 to 165 mediate DNA binding; that stretch reads IGMRKTLVFYKGRAPNGQKTDWIMHEYRLESDENAPPQEEGWVVCRAFKKKPMTGQ. Positions 312–347 are disordered; that stretch reads GVSGFGGHHEEDNNKIGHYNNEESNNKGSVETASST. Positions 318–336 are enriched in basic and acidic residues; it reads GHHEEDNNKIGHYNNEESN. Polar residues predominate over residues 337-347; the sequence is NKGSVETASST.

The protein belongs to the plant vascular related NAC-domain protein family. Interacts with NAC030/VND7. In terms of tissue distribution, detected in root protoxylem and metaxylem poles and in vessels of protoxylems, outermost metaxylems, inner metaxylems, shoots and hypocotyls. Expressed in roots, hypocotyls, cotyledons and leaves. Present in developing xylems. Specifically expressed in vessels but not in interfascicular fibers in stems.

Its subcellular location is the nucleus. Functionally, transcription activator that binds to the secondary wall NAC binding element (SNBE), 5'-(T/A)NN(C/T)(T/C/G)TNNNNNNNA(A/C)GN(A/C/T)(A/T)-3', in the promoter of target genes. Involved in xylem formation by promoting the expression of secondary wall-associated transcription factors and of genes involved in secondary wall biosynthesis and programmed cell death, genes driven by the secondary wall NAC binding element (SNBE). Triggers thickening of secondary walls. This is NAC domain-containing protein 76 from Arabidopsis thaliana (Mouse-ear cress).